The following is an 873-amino-acid chain: Protein SEY1 (873 aa).

At 1–750 the chain is on the cytoplasmic side; the sequence is MVANGHFFAG…KRSAIGGITQ (750 aa). The GB1/RHD3-type G domain occupies 50 to 308; that stretch reads GFNYHLISVF…IPADGFAVYA (259 aa). 60–67 is a GTP binding site; it reads GSQSTGKS. Residues 677–701 form a disordered region; it reads LDKWIGHTPSSATPADEEDLTPIGG. The span at 691–701 shows a compositional bias: acidic residues; that stretch reads ADEEDLTPIGG. A helical transmembrane segment spans residues 751–771; the sequence is VPLYFYGLLLALGWNEIVAVL. Residues 772–774 are Lumenal-facing; sequence RNP. A helical transmembrane segment spans residues 775–795; the sequence is AYFLLLFVCAVTAYVTYQLNL. Residues 796-873 lie on the Cytoplasmic side of the membrane; the sequence is WGPIIKMTEA…IDDADDDDDF (78 aa). Positions 841–873 are disordered; that stretch reads EGYDMSNMKNRKSAGGYQNNRSHIDDADDDDDF.

Belongs to the TRAFAC class dynamin-like GTPase superfamily. GB1/RHD3 GTPase family. RHD3 subfamily.

The protein localises to the endoplasmic reticulum membrane. In terms of biological role, cooperates with the reticulon proteins and tubule-shaping DP1 family proteins to generate and maintain the structure of the tubular endoplasmic reticulum network. Has GTPase activity, which is required for its function in ER organization. This is Protein SEY1 from Paracoccidioides lutzii (strain ATCC MYA-826 / Pb01) (Paracoccidioides brasiliensis).